The following is a 114-amino-acid chain: T cell receptor beta variable 4-3 (114 aa).

Residues 1 to 21 form the signal peptide; that stretch reads MGCRLLCCAVLCLLGAVPMET. The Ig-like domain maps to 22–114; the sequence is GVTQTPRHLV…SALYLCASSQ (93 aa). A disulfide bridge links Cys-42 with Cys-110. N-linked (GlcNAc...) asparagine glycans are attached at residues Asn-76 and Asn-89.

As to quaternary structure, alpha-beta TR is a heterodimer composed of an alpha and beta chain; disulfide-linked. The alpha-beta TR is associated with the transmembrane signaling CD3 coreceptor proteins to form the TR-CD3 (TcR or TCR). The assembly of alpha-beta TR heterodimers with CD3 occurs in the endoplasmic reticulum where a single alpha-beta TR heterodimer associates with one CD3D-CD3E heterodimer, one CD3G-CD3E heterodimer and one CD247 homodimer forming a stable octameric structure. CD3D-CD3E and CD3G-CD3E heterodimers preferentially associate with TR alpha and TR beta chains, respectively. The association of the CD247 homodimer is the last step of TcR assembly in the endoplasmic reticulum and is required for transport to the cell surface.

The protein resides in the cell membrane. V region of the variable domain of T cell receptor (TR) beta chain that participates in the antigen recognition. Alpha-beta T cell receptors are antigen specific receptors which are essential to the immune response and are present on the cell surface of T lymphocytes. Recognize peptide-major histocompatibility (MH) (pMH) complexes that are displayed by antigen presenting cells (APC), a prerequisite for efficient T cell adaptive immunity against pathogens. Binding of alpha-beta TR to pMH complex initiates TR-CD3 clustering on the cell surface and intracellular activation of LCK that phosphorylates the ITAM motifs of CD3G, CD3D, CD3E and CD247 enabling the recruitment of ZAP70. In turn ZAP70 phosphorylates LAT, which recruits numerous signaling molecules to form the LAT signalosome. The LAT signalosome propagates signal branching to three major signaling pathways, the calcium, the mitogen-activated protein kinase (MAPK) kinase and the nuclear factor NF-kappa-B (NF-kB) pathways, leading to the mobilization of transcription factors that are critical for gene expression and essential for T cell growth and differentiation. The T cell repertoire is generated in the thymus, by V-(D)-J rearrangement. This repertoire is then shaped by intrathymic selection events to generate a peripheral T cell pool of self-MH restricted, non-autoaggressive T cells. Post-thymic interaction of alpha-beta TR with the pMH complexes shapes TR structural and functional avidity. In Homo sapiens (Human), this protein is T cell receptor beta variable 4-3.